The following is a 533-amino-acid chain: Bifunctional purine biosynthesis protein PurH (533 aa).

The region spanning 1-148 (MDTPRPIKRA…KNHKDVTIVV (148 aa)) is the MGS-like domain.

The protein belongs to the PurH family.

It carries out the reaction (6R)-10-formyltetrahydrofolate + 5-amino-1-(5-phospho-beta-D-ribosyl)imidazole-4-carboxamide = 5-formamido-1-(5-phospho-D-ribosyl)imidazole-4-carboxamide + (6S)-5,6,7,8-tetrahydrofolate. It catalyses the reaction IMP + H2O = 5-formamido-1-(5-phospho-D-ribosyl)imidazole-4-carboxamide. Its pathway is purine metabolism; IMP biosynthesis via de novo pathway; 5-formamido-1-(5-phospho-D-ribosyl)imidazole-4-carboxamide from 5-amino-1-(5-phospho-D-ribosyl)imidazole-4-carboxamide (10-formyl THF route): step 1/1. The protein operates within purine metabolism; IMP biosynthesis via de novo pathway; IMP from 5-formamido-1-(5-phospho-D-ribosyl)imidazole-4-carboxamide: step 1/1. This is Bifunctional purine biosynthesis protein PurH from Colwellia psychrerythraea (strain 34H / ATCC BAA-681) (Vibrio psychroerythus).